Here is a 427-residue protein sequence, read N- to C-terminus: Homoprotocatechuate catabolism bifunctional isomerase/decarboxylase (427 aa).

Approximate repeat units follow at residues 1 to 202 and 203 to 405; these read MKGT…LENP and VVDE…VGDE. A divalent metal cation-binding residues include Glu-276, Glu-278, and Asp-307.

Belongs to the FAH family. In terms of assembly, monomer. The cofactor is Mg(2+).

It catalyses the reaction (2E,4Z)-5-hydroxypenta-2,4-diene-1,2,5-tricarboxylate = (3E,5R)-5-carboxy-2-oxohept-3-enedioate. It carries out the reaction (3E,5R)-5-carboxy-2-oxohept-3-enedioate + H(+) = (4Z)-2-oxohept-4-enedioate + CO2. The protein operates within aromatic compound metabolism; 4-hydroxyphenylacetate degradation; pyruvate and succinate semialdehyde from 4-hydroxyphenylacetate: step 4/7. It functions in the pathway aromatic compound metabolism; 4-hydroxyphenylacetate degradation; pyruvate and succinate semialdehyde from 4-hydroxyphenylacetate: step 5/7. Functionally, decarboxylates OPET (5-oxo-pent-3-ene-1,2,5-tricarboxylic acid) into HHDD (2-hydroxy-hept-2,4-diene-1,7-dioate) and isomerizes it to OHED (2-oxo-hept-3-ene-1,7-dioate). The protein is Homoprotocatechuate catabolism bifunctional isomerase/decarboxylase (hpcE) of Escherichia coli.